The sequence spans 225 residues: Uracil-DNA glycosylase (225 aa).

The Proton acceptor role is filled by Asp-65.

Belongs to the uracil-DNA glycosylase (UDG) superfamily. UNG family.

The protein resides in the cytoplasm. The enzyme catalyses Hydrolyzes single-stranded DNA or mismatched double-stranded DNA and polynucleotides, releasing free uracil.. Excises uracil residues from the DNA which can arise as a result of misincorporation of dUMP residues by DNA polymerase or due to deamination of cytosine. This is Uracil-DNA glycosylase from Bacillus cytotoxicus (strain DSM 22905 / CIP 110041 / 391-98 / NVH 391-98).